Here is a 210-residue protein sequence, read N- to C-terminus: Cancer/testis antigen 2 (210 aa).

2 stretches are compositionally biased toward gly residues: residues 1-47 and 56-66; these read MQAE…GPRG and PRGGAPRGPHG. Disordered stretches follow at residues 1–80 and 154–197; these read MQAE…PCGA and GLGS…DGCR. A compositionally biased stretch (basic and acidic residues) spans 163–177; the sequence is QKARDLRTPKHKVSE.

This sequence belongs to the CTAG/PCC1 family. As to expression, testis and very low level in placenta and in some uterus samples. Observed in 25-50% of tumor samples of melanomas, non-small-cell lung carcinomas, bladder, prostate and head and neck cancers.

The sequence is that of Cancer/testis antigen 2 (CTAG2) from Homo sapiens (Human).